Reading from the N-terminus, the 862-residue chain is Squamosa promoter-binding-like protein 1 (862 aa).

The segment at lysine 55 to glycine 98 is disordered. The segment covering alanine 72 to glycine 87 has biased composition (polar residues). An SBP-type zinc finger spans residues glycine 104–valine 181. Positions 107, 112, 129, 132, 148, 151, 155, and 167 each coordinate Zn(2+). The Bipartite nuclear localization signal motif lies at lysine 164 to lysine 180.

As to expression, ubiquitous.

It is found in the nucleus. Its function is as follows. Trans-acting factor that binds specifically to the consensus nucleotide sequence 5'-TNCGTACAA-3'. This Oryza sativa subsp. japonica (Rice) protein is Squamosa promoter-binding-like protein 1 (SPL1).